Here is a 201-residue protein sequence, read N- to C-terminus: Cysteine dioxygenase type 1 (201 aa).

The Fe cation site is built by His86, His88, and His141. Residues 93 to 158 constitute a cross-link (3'-(S-cysteinyl)-tyrosine (Cys-Tyr)); the sequence is CFLKLLQGQL…TEPAVSLHLY (66 aa).

It belongs to the cysteine dioxygenase family. Monomer. Requires Fe cation as cofactor. It depends on Ni(2+) as a cofactor. Zn(2+) is required as a cofactor. The thioether cross-link between Cys-93 and Tyr-158 plays a structural role through stabilizing the Fe(2+) ion, and prevents the production of highly damaging free hydroxyl radicals by holding the oxygen radical via hydroxyl hydrogen.

It catalyses the reaction L-cysteine + O2 = 3-sulfino-L-alanine + H(+). It participates in organosulfur biosynthesis; taurine biosynthesis; hypotaurine from L-cysteine: step 1/2. Catalyzes the oxidation of cysteine to cysteine sulfinic acid with addition of molecular dioxygen. This is Cysteine dioxygenase type 1 (cdo1) from Danio rerio (Zebrafish).